An 872-amino-acid polypeptide reads, in one-letter code: Leucine-rich repeat-containing protein 66 (872 aa).

Residues 4–24 (FYVRVTILVTGLCFVETVTTP) traverse the membrane as a helical segment. N-linked (GlcNAc...) asparagine glycans are attached at residues N45 and N108. LRR repeat units follow at residues 142 to 164 (RLQVLILQRNQLSGTPKGLWKLK), 165 to 186 (SLRSLDLSFNRIVHIGLSDFHG), 189 to 210 (QLESIYLKSNKICTIHPKAFKG), 213 to 234 (KLQVVDLRSNALTTLVPIVTIA), and 239 to 259 (HLELGLADNQWQCSESNVNFQ). The tract at residues 339-363 (LRGMWPQSPVELRDSQDEQVTDRKD) is disordered. Residues 349–363 (ELRDSQDEQVTDRKD) are compositionally biased toward basic and acidic residues. Residues 371–391 (LAICLSVFITFVVAFCLGAFA) form a helical membrane-spanning segment. A compositionally biased stretch (polar residues) spans 467–483 (QMLGSNGTDPGHQQSPE). Disordered stretches follow at residues 467-501 (QMLGSNGTDPGHQQSPEQLKDSNESRSGDSIVLPS), 560-579 (GTFPSSVESRRDDLHPSQPR), 695-761 (NYES…SQRI), and 776-872 (LISG…SKHW). A glycan (N-linked (GlcNAc...) asparagine) is linked at N472. A compositionally biased stretch (basic and acidic residues) spans 484-493 (QLKDSNESRS). S718 carries the phosphoserine modification. Polar residues-rich tracts occupy residues 725–736 (SVENDGTSQPLP), 746–760 (SVTSAESVEDLTSQR), and 785–805 (CETNQENDSSSLDPENRSTWP). S752 carries the phosphoserine modification. Residues 831–841 (VDWHYSLRDLE) are compositionally biased toward basic and acidic residues.

The protein localises to the membrane. The protein is Leucine-rich repeat-containing protein 66 (Lrrc66) of Mus musculus (Mouse).